A 311-amino-acid chain; its full sequence is Cytochrome f (311 aa).

Residues 1-27 (MRRHLSLVLGSLVIGLALLIAPGASWA) form the signal peptide. The heme site is built by tyrosine 28, cysteine 48, cysteine 51, and histidine 52. Residues 277 to 297 (IYGLLAFFAAVAIAQIMLVLK) traverse the membrane as a helical segment.

The protein belongs to the cytochrome f family. In terms of assembly, the 4 large subunits of the cytochrome b6-f complex are cytochrome b6, subunit IV (17 kDa polypeptide, PetD), cytochrome f and the Rieske protein, while the 4 small subunits are PetG, PetL, PetM and PetN. The complex functions as a dimer. Requires heme as cofactor.

The protein localises to the cellular thylakoid membrane. Component of the cytochrome b6-f complex, which mediates electron transfer between photosystem II (PSII) and photosystem I (PSI), cyclic electron flow around PSI, and state transitions. The protein is Cytochrome f of Synechococcus sp. (strain CC9902).